We begin with the raw amino-acid sequence, 280 residues long: Homeobox protein Hox-B1b (280 aa).

A disordered region spans residues 46–65 (GRLAAPTSAPHQSPGLPLHH). An Antp-type hexapeptide motif is present at residues 170-175 (TFDWMK). Positions 195–254 (HNVIRTNFTTKQLTELEKEFHFNKYLTRARRVEVAASLELNETQVKIWFQNRRMKQKKRE) form a DNA-binding region, homeobox. Residues 249-280 (KQKKREKLGGVLVHREKASGPESSPKAKESEP) are disordered. A compositionally biased stretch (basic and acidic residues) spans 261–280 (VHREKASGPESSPKAKESEP).

This sequence belongs to the Antp homeobox family. Labial subfamily.

The protein resides in the nucleus. Functionally, sequence-specific transcription factor which is part of a developmental regulatory system that provides cells with specific positional identities on the anterior-posterior axis. The sequence is that of Homeobox protein Hox-B1b (hoxb1b) from Takifugu rubripes (Japanese pufferfish).